Consider the following 366-residue polypeptide: Flagellar P-ring protein (366 aa).

A signal peptide spans 1-20 (MVIKFLSALILLLVTTAAQA).

This sequence belongs to the FlgI family. The basal body constitutes a major portion of the flagellar organelle and consists of four rings (L,P,S, and M) mounted on a central rod.

The protein localises to the periplasm. The protein resides in the bacterial flagellum basal body. Its function is as follows. Assembles around the rod to form the L-ring and probably protects the motor/basal body from shearing forces during rotation. The polypeptide is Flagellar P-ring protein (Escherichia coli (strain SE11)).